The chain runs to 757 residues: 5-methyltetrahydropteroyltriglutamate--homocysteine methyltransferase (757 aa).

Residues 17–20 and lysine 115 contribute to the 5-methyltetrahydropteroyltri-L-glutamate site; that span reads RELK. Residues 430-432 and glutamate 483 contribute to the L-homocysteine site; that span reads IGS. Residues 430–432 and glutamate 483 contribute to the L-methionine site; that span reads IGS. Residues 514–515 and tryptophan 560 each bind 5-methyltetrahydropteroyltri-L-glutamate; that span reads RC. Aspartate 598 is an L-homocysteine binding site. Aspartate 598 contacts L-methionine. Glutamate 604 lines the 5-methyltetrahydropteroyltri-L-glutamate pocket. Histidine 640, cysteine 642, and glutamate 664 together coordinate Zn(2+). The active-site Proton donor is histidine 693. Cysteine 725 contributes to the Zn(2+) binding site.

Belongs to the vitamin-B12 independent methionine synthase family. Zn(2+) serves as cofactor.

The enzyme catalyses 5-methyltetrahydropteroyltri-L-glutamate + L-homocysteine = tetrahydropteroyltri-L-glutamate + L-methionine. It functions in the pathway amino-acid biosynthesis; L-methionine biosynthesis via de novo pathway; L-methionine from L-homocysteine (MetE route): step 1/1. Its function is as follows. Catalyzes the transfer of a methyl group from 5-methyltetrahydrofolate to homocysteine resulting in methionine formation. This Buchnera aphidicola subsp. Schizaphis graminum (strain Sg) protein is 5-methyltetrahydropteroyltriglutamate--homocysteine methyltransferase.